We begin with the raw amino-acid sequence, 494 residues long: Flagellin A (494 aa).

This sequence belongs to the bacterial flagellin family. As to quaternary structure, heteromer of FlaA and FlaB. FlaB is located proximal to the hook while the remainder of the filament is composed of the predominant FlaA.

Its subcellular location is the secreted. It localises to the bacterial flagellum. Functionally, flagellin is the subunit protein which polymerizes to form the filaments of bacterial flagella. Important for motility and virulence. This chain is Flagellin A (flaA), found in Helicobacter mustelae.